Here is a 197-residue protein sequence, read N- to C-terminus: Probable GTP-binding protein EngB (197 aa).

The EngB-type G domain maps to 25–197 (SAPEIAFAGR…VRDEFFKFTR (173 aa)). GTP contacts are provided by residues 33–40 (GRSNVGKS), 60–64 (GCTRQ), 79–82 (DLPG), 146–149 (TKID), and 177–179 (MSI). Mg(2+)-binding residues include Ser40 and Thr62.

The protein belongs to the TRAFAC class TrmE-Era-EngA-EngB-Septin-like GTPase superfamily. EngB GTPase family. It depends on Mg(2+) as a cofactor.

Necessary for normal cell division and for the maintenance of normal septation. This Wolbachia pipientis wMel protein is Probable GTP-binding protein EngB.